Consider the following 261-residue polypeptide: Bcl-2-binding component 3, isoforms 3/4 (261 aa).

Residues 27–261 (QICGPRERHG…ASAGDFLCTM (235 aa)) are disordered. The span at 40–50 (PGGQLPGARRG) shows a compositional bias: low complexity. Pro residues predominate over residues 53–63 (PRRPAPLPARP). Positions 64–73 (PGALGSVLRP) are enriched in low complexity. 2 stretches are compositionally biased toward basic residues: residues 74-87 (LRAR…RPHP) and 95-106 (RPHRPTRRHRRP). Residues 124–146 (PGRSSALALAGGAAPGVARAQRP) are compositionally biased toward low complexity. Over residues 147–171 (GGSGGRSHPGGPGSPRGGGTVGPGD) the composition is skewed to gly residues. Over residues 172 to 197 (RGPAAADGGRPQRTVRAAETRGAAAA) the composition is skewed to low complexity.

Does not interact with BCL2.

In terms of biological role, does not affect cell growth. The polypeptide is Bcl-2-binding component 3, isoforms 3/4 (BBC3) (Homo sapiens (Human)).